The primary structure comprises 194 residues: Thymidine kinase (194 aa).

ATP is bound by residues 15–22 (GSMFSGKS) and 88–91 (DEVQ). Glu-89 acts as the Proton acceptor in catalysis. Residues Cys-145, Cys-148, Cys-183, and His-186 each contribute to the Zn(2+) site.

The protein belongs to the thymidine kinase family. Homotetramer.

It localises to the cytoplasm. It carries out the reaction thymidine + ATP = dTMP + ADP + H(+). The sequence is that of Thymidine kinase from Bacillus velezensis (strain DSM 23117 / BGSC 10A6 / LMG 26770 / FZB42) (Bacillus amyloliquefaciens subsp. plantarum).